The chain runs to 434 residues: E3 ubiquitin-protein transferase MAEA (434 aa).

The segment at 1–124 (MAVQESAAQL…AAASVWKRKR (124 aa)) is extracellular and involved in cell to cell contact. Thr28 is subject to Phosphothreonine. The LisH domain occupies 121-153 (KRKRMDRMMVEHLLRCGYYNTAVKLARQSGIED). In terms of domain architecture, CTLH spans 159-254 (MFLTAKEVEE…ELIRQNKRLD (96 aa)). A disordered region spans residues 190-222 (RKMKGRQSEHDAKTGRKSRVASGSPKESEDLGM). The RING-Gid-type zinc finger occupies 352–419 (CPVCSRSLNK…QDDKVVCPRT (68 aa)).

Identified in the CTLH complex that contains GID4, RANBP9 and/or RANBP10, MKLN1, MAEA, RMND5A (or alternatively its paralog RMND5B), GID8, ARMC8, WDR26 and YPEL5. Within this complex, MAEA, RMND5A (or alternatively its paralog RMND5B), GID8, WDR26, and RANBP9 and/or RANBP10 form the catalytic core, while GID4, MKLN1, ARMC8 and YPEL5 have ancillary roles. Interacts with F-actin. In terms of processing, autoubiquitinated as component of the CTLH E3 ubiquitin-protein ligase complex (in vitro).

The protein localises to the cytoplasm. Its subcellular location is the nucleus. It localises to the nucleoplasm. The protein resides in the nucleus matrix. It is found in the cell membrane. The protein localises to the cytoskeleton. The catalysed reaction is S-ubiquitinyl-[E2 ubiquitin-conjugating enzyme]-L-cysteine + [acceptor protein]-L-lysine = [E2 ubiquitin-conjugating enzyme]-L-cysteine + N(6)-ubiquitinyl-[acceptor protein]-L-lysine.. In terms of biological role, core component of the CTLH E3 ubiquitin-protein ligase complex that selectively accepts ubiquitin from UBE2H and mediates ubiquitination and subsequent proteasomal degradation of the transcription factor HBP1. MAEA and RMND5A are both required for catalytic activity of the CTLH E3 ubiquitin-protein ligase complex. MAEA is required for normal cell proliferation. The CTLH E3 ubiquitin-protein ligase complex is not required for the degradation of enzymes involved in gluconeogenesis, such as FBP1. Plays a role in erythroblast enucleation during erythrocyte maturation and in the development of mature macrophages. Mediates the attachment of erythroid cell to mature macrophages; this MAEA-mediated contact inhibits erythroid cell apoptosis. Participates in erythroblastic island formation, which is the functional unit of definitive erythropoiesis. Associates with F-actin to regulate actin distribution in erythroblasts and macrophages. May contribute to nuclear architecture and cells division events. This is E3 ubiquitin-protein transferase MAEA (MAEA) from Bos taurus (Bovine).